The sequence spans 134 residues: Small ribosomal subunit protein uS9 (134 aa).

The disordered stretch occupies residues 114-134 (QKEAKNFGGPGARSKYQKSYR).

The protein belongs to the universal ribosomal protein uS9 family.

This is Small ribosomal subunit protein uS9 from Methanosarcina mazei (strain ATCC BAA-159 / DSM 3647 / Goe1 / Go1 / JCM 11833 / OCM 88) (Methanosarcina frisia).